The following is a 458-amino-acid chain: NADH-quinone oxidoreductase subunit N 1 (458 aa).

14 helical membrane passes run 12-32, 37-57, 70-90, 101-121, 124-144, 159-179, 199-219, 230-250, 266-286, 293-313, 321-341, 361-381, 393-413, and 438-458; these read ALIP…AGLL, EVLV…IPSF, FLTI…LLVL, FNES…LVSA, LISF…LVGI, FMLG…IYGA, ILIG…LVPF, APTP…LGAF, SNFL…FALI, MLAY…IVGT, VAYM…VIAF, IAML…GFIV, GFTW…YYYL, and VAIL…LFLI.

This sequence belongs to the complex I subunit 2 family. As to quaternary structure, NDH-1 is composed of 14 different subunits. Subunits NuoA, H, J, K, L, M, N constitute the membrane sector of the complex.

Its subcellular location is the cell inner membrane. The catalysed reaction is a quinone + NADH + 5 H(+)(in) = a quinol + NAD(+) + 4 H(+)(out). Its function is as follows. NDH-1 shuttles electrons from NADH, via FMN and iron-sulfur (Fe-S) centers, to quinones in the respiratory chain. The immediate electron acceptor for the enzyme in this species is believed to be ubiquinone. Couples the redox reaction to proton translocation (for every two electrons transferred, four hydrogen ions are translocated across the cytoplasmic membrane), and thus conserves the redox energy in a proton gradient. The polypeptide is NADH-quinone oxidoreductase subunit N 1 (Thermodesulfovibrio yellowstonii (strain ATCC 51303 / DSM 11347 / YP87)).